The chain runs to 345 residues: MKEFDLESYDYHLPKELIANYPVLPKEKAKLLVYERRSQTITHTTFEHVLDFFPKNALVVLNDTKVIKARLFGSKHAFLPSKTTEVFFHRFFKGNTALTQIKGKIKVGDKIFFDANYYAEVLELLHNGQRLIAFYDNQTPLNQENILKLLEQYGHMPLPPYIKRADESLDAHEYQSVFAKHIGAVAAPTASLHFSQNALEKLLKDFKHAFLTLHVGAGTFLSVETKDIREHQIHTEVLHIPKKSQEILQESQEVLCIGTTALRSVEYFKRLKNPNQESFECDIFLHLANPIQHVNHLLTNFHLPKSSLLMLVSAMIGLEKTKEIYKIAIEKKYRFYSYGDGMLIL.

The protein belongs to the QueA family. Monomer.

The protein resides in the cytoplasm. The enzyme catalyses 7-aminomethyl-7-carbaguanosine(34) in tRNA + S-adenosyl-L-methionine = epoxyqueuosine(34) in tRNA + adenine + L-methionine + 2 H(+). It functions in the pathway tRNA modification; tRNA-queuosine biosynthesis. Transfers and isomerizes the ribose moiety from AdoMet to the 7-aminomethyl group of 7-deazaguanine (preQ1-tRNA) to give epoxyqueuosine (oQ-tRNA). The sequence is that of S-adenosylmethionine:tRNA ribosyltransferase-isomerase from Helicobacter pylori (strain J99 / ATCC 700824) (Campylobacter pylori J99).